Here is a 637-residue protein sequence, read N- to C-terminus: Coiled-coil domain-containing protein 22 homolog (637 aa).

2 coiled-coil regions span residues E322–A489 and S608–N637.

The protein belongs to the CCDC22 family.

The protein is Coiled-coil domain-containing protein 22 homolog of Dictyostelium discoideum (Social amoeba).